The following is a 216-amino-acid chain: Sperm microtubule inner protein 8 (216 aa).

Microtubule inner protein component of sperm flagellar doublet microtubules. In terms of tissue distribution, expressed in testis.

It is found in the cytoplasm. Its subcellular location is the cytoskeleton. The protein resides in the flagellum axoneme. Functionally, microtubule inner protein (MIP) part of the dynein-decorated doublet microtubules (DMTs) in flagellum axoneme. May serve to reinforce and thus stabilize the microtubule structure in the sperm flagella. This chain is Sperm microtubule inner protein 8 (Spmip8), found in Mus musculus (Mouse).